The following is a 496-amino-acid chain: Probable cytosol aminopeptidase (496 aa).

Lysine 267 and aspartate 272 together coordinate Mn(2+). The active site involves lysine 279. Mn(2+) is bound by residues aspartate 290, aspartate 349, and glutamate 351. Arginine 353 is a catalytic residue.

Belongs to the peptidase M17 family. Requires Mn(2+) as cofactor.

The protein resides in the cytoplasm. It carries out the reaction Release of an N-terminal amino acid, Xaa-|-Yaa-, in which Xaa is preferably Leu, but may be other amino acids including Pro although not Arg or Lys, and Yaa may be Pro. Amino acid amides and methyl esters are also readily hydrolyzed, but rates on arylamides are exceedingly low.. The enzyme catalyses Release of an N-terminal amino acid, preferentially leucine, but not glutamic or aspartic acids.. In terms of biological role, presumably involved in the processing and regular turnover of intracellular proteins. Catalyzes the removal of unsubstituted N-terminal amino acids from various peptides. This is Probable cytosol aminopeptidase from Methylobacillus flagellatus (strain ATCC 51484 / DSM 6875 / VKM B-1610 / KT).